The chain runs to 538 residues: Small ribosomal subunit protein uS3m (538 aa).

A disordered region spans residues 111–134 (SSEGTEEERNEVRGRGAGKRVESI). Positions 120 to 134 (NEVRGRGAGKRVESI) are enriched in basic and acidic residues.

The protein belongs to the universal ribosomal protein uS3 family.

The protein localises to the mitochondrion. The sequence is that of Small ribosomal subunit protein uS3m (RPS3) from Oryza sativa subsp. japonica (Rice).